Reading from the N-terminus, the 87-residue chain is Putative defensin-like protein 304 (87 aa).

The first 19 residues, 1-19 (MKSNKVTFFLGLFLVSAFC), serve as a signal peptide directing secretion. 3 disulfide bridges follow: Cys-27-Cys-46, Cys-33-Cys-51, and Cys-40-Cys-53.

Belongs to the DEFL family.

Its subcellular location is the secreted. The chain is Putative defensin-like protein 304 from Arabidopsis thaliana (Mouse-ear cress).